The primary structure comprises 491 residues: Cytochrome P450 2B9 (491 aa).

Ser-128 carries the phosphoserine; by PKA modification. Cys-436 contributes to the heme binding site.

The protein belongs to the cytochrome P450 family. Heme serves as cofactor.

The protein resides in the endoplasmic reticulum membrane. The protein localises to the microsome membrane. The enzyme catalyses an organic molecule + reduced [NADPH--hemoprotein reductase] + O2 = an alcohol + oxidized [NADPH--hemoprotein reductase] + H2O + H(+). In terms of biological role, cytochromes P450 are a group of heme-thiolate monooxygenases. In liver microsomes, this enzyme is involved in an NADPH-dependent electron transport pathway. It oxidizes a variety of structurally unrelated compounds, including steroids, fatty acids, and xenobiotics. This Mus musculus (Mouse) protein is Cytochrome P450 2B9 (Cyp2b9).